Here is a 244-residue protein sequence, read N- to C-terminus: MIPQVVTSETVAMISPNGMSLPQTDKPQPFHQWQDSLKKHLKAEIKVMAAIQIMCAVMVLSLGIILASVPSNLHFTSVFSVLLKSGYPFIGALFFIVSGILSIVTETKSTKILVDSSLTLNILSVSFAFMGIIIISVSLAGLHPASEQCLQSKELRPTEYHYYQFLDRNECFAAKSVLAGVFSLMLISTMLELGLAVLTAMLWWKQSHSNIPGNVMFLPHSSNNDSNMESKVLCNPSYEEQLVC.

Residues 1–46 lie on the Cytoplasmic side of the membrane; the sequence is MIPQVVTSETVAMISPNGMSLPQTDKPQPFHQWQDSLKKHLKAEIK. Residues 47-67 form a helical membrane-spanning segment; sequence VMAAIQIMCAVMVLSLGIILA. Residues 68 to 84 are Extracellular-facing; that stretch reads SVPSNLHFTSVFSVLLK. A helical transmembrane segment spans residues 85–105; the sequence is SGYPFIGALFFIVSGILSIVT. The Cytoplasmic segment spans residues 106 to 121; that stretch reads ETKSTKILVDSSLTLN. A helical membrane pass occupies residues 122-142; the sequence is ILSVSFAFMGIIIISVSLAGL. Residues 143-176 are Extracellular-facing; it reads HPASEQCLQSKELRPTEYHYYQFLDRNECFAAKS. The helical transmembrane segment at 177–197 threads the bilayer; it reads VLAGVFSLMLISTMLELGLAV. Over 198 to 244 the chain is Cytoplasmic; that stretch reads LTAMLWWKQSHSNIPGNVMFLPHSSNNDSNMESKVLCNPSYEEQLVC.

This sequence belongs to the MS4A family. In terms of tissue distribution, expressed at high levels in thymus, spleen, and peripheral lymph nodes, with less abundant levels in non-lymphoid tissues.

It is found in the membrane. In terms of biological role, may be involved in signal transduction as a component of a multimeric receptor complex. This Mus musculus (Mouse) protein is Membrane-spanning 4-domains subfamily A member 6B (Ms4a6b).